A 202-amino-acid polypeptide reads, in one-letter code: Ribosome maturation factor RimP (202 aa).

Belongs to the RimP family.

The protein resides in the cytoplasm. Its function is as follows. Required for maturation of 30S ribosomal subunits. This is Ribosome maturation factor RimP from Paracidovorax citrulli (strain AAC00-1) (Acidovorax citrulli).